Here is a 142-residue protein sequence, read N- to C-terminus: Putative transcriptional regulatory protein Mevan_1098 (142 aa).

Belongs to the Tfx family.

Functionally, putative transcriptional regulator. This is Putative transcriptional regulatory protein Mevan_1098 from Methanococcus vannielii (strain ATCC 35089 / DSM 1224 / JCM 13029 / OCM 148 / SB).